The primary structure comprises 212 residues: Imidazole glycerol phosphate synthase subunit HisH (212 aa).

The Glutamine amidotransferase type-1 domain maps to threonine 3–tryptophan 212. The active-site Nucleophile is the cysteine 81. Residues histidine 190 and glutamate 192 contribute to the active site.

In terms of assembly, heterodimer of HisH and HisF.

The protein localises to the cytoplasm. The enzyme catalyses 5-[(5-phospho-1-deoxy-D-ribulos-1-ylimino)methylamino]-1-(5-phospho-beta-D-ribosyl)imidazole-4-carboxamide + L-glutamine = D-erythro-1-(imidazol-4-yl)glycerol 3-phosphate + 5-amino-1-(5-phospho-beta-D-ribosyl)imidazole-4-carboxamide + L-glutamate + H(+). The catalysed reaction is L-glutamine + H2O = L-glutamate + NH4(+). Its pathway is amino-acid biosynthesis; L-histidine biosynthesis; L-histidine from 5-phospho-alpha-D-ribose 1-diphosphate: step 5/9. In terms of biological role, IGPS catalyzes the conversion of PRFAR and glutamine to IGP, AICAR and glutamate. The HisH subunit catalyzes the hydrolysis of glutamine to glutamate and ammonia as part of the synthesis of IGP and AICAR. The resulting ammonia molecule is channeled to the active site of HisF. This Pseudomonas savastanoi pv. phaseolicola (strain 1448A / Race 6) (Pseudomonas syringae pv. phaseolicola (strain 1448A / Race 6)) protein is Imidazole glycerol phosphate synthase subunit HisH.